We begin with the raw amino-acid sequence, 166 residues long: Phospholipase A2 inhibitor clone 04 (166 aa).

Positions 1–19 are cleaved as a signal peptide; sequence MRLILLSSLLLLGIFLANG. In terms of domain architecture, C-type lectin spans 46–161; sequence LKDAFLTVHR…CDDNRLVVCE (116 aa). 2 disulfides stabilise this stretch: C83–C160 and C138–C152. A glycan (N-linked (GlcNAc...) asparagine) is linked at N122.

Belongs to the alpha-type phospholipase A2 inhibitor family. In terms of assembly, homotrimer; non-covalently linked. In terms of tissue distribution, expressed by the liver.

It localises to the secreted. In terms of biological role, this phospholipase A2 inhibitor binds directly phospholipase A2 in the presence or absence of calcium. The polypeptide is Phospholipase A2 inhibitor clone 04 (Bothrops moojeni (Lance-headed viper)).